The chain runs to 508 residues: Protein DETOXIFICATION 52 (508 aa).

The next 12 membrane-spanning stretches (helical) occupy residues Ile48–Ile68, Leu78–Met98, Val122–Ile142, Ala156–Leu176, Leu189–Ser209, Ala222–Leu242, Ile270–Ile290, Gly300–Val320, Ile341–Val361, Ile368–Leu388, Ile415–Tyr437, and Gly441–Thr463.

This sequence belongs to the multi antimicrobial extrusion (MATE) (TC 2.A.66.1) family. Detected in the part of the veins in cotyledons of 6-day-old seedlings and the basal parts of the petioles in older plants. Highly expressed in the vascular tissues of hypocotyl in dark-grown seedlings.

The protein localises to the late endosome membrane. Functionally, may act as a negative regulator of hypocotyl cell elongation in the light. This chain is Protein DETOXIFICATION 52, found in Arabidopsis thaliana (Mouse-ear cress).